The following is a 362-amino-acid chain: UDP-N-acetylglucosamine--N-acetylmuramyl-(pentapeptide) pyrophosphoryl-undecaprenol N-acetylglucosamine transferase (362 aa).

UDP-N-acetyl-alpha-D-glucosamine is bound by residues 14–16 (TGG), R170, S199, and Q289.

The protein belongs to the glycosyltransferase 28 family. MurG subfamily.

The protein resides in the cell inner membrane. The catalysed reaction is di-trans,octa-cis-undecaprenyl diphospho-N-acetyl-alpha-D-muramoyl-L-alanyl-D-glutamyl-meso-2,6-diaminopimeloyl-D-alanyl-D-alanine + UDP-N-acetyl-alpha-D-glucosamine = di-trans,octa-cis-undecaprenyl diphospho-[N-acetyl-alpha-D-glucosaminyl-(1-&gt;4)]-N-acetyl-alpha-D-muramoyl-L-alanyl-D-glutamyl-meso-2,6-diaminopimeloyl-D-alanyl-D-alanine + UDP + H(+). It functions in the pathway cell wall biogenesis; peptidoglycan biosynthesis. Functionally, cell wall formation. Catalyzes the transfer of a GlcNAc subunit on undecaprenyl-pyrophosphoryl-MurNAc-pentapeptide (lipid intermediate I) to form undecaprenyl-pyrophosphoryl-MurNAc-(pentapeptide)GlcNAc (lipid intermediate II). The sequence is that of UDP-N-acetylglucosamine--N-acetylmuramyl-(pentapeptide) pyrophosphoryl-undecaprenol N-acetylglucosamine transferase from Borrelia hermsii (strain HS1 / DAH).